The primary structure comprises 116 residues: MSNHKLIEAVTKSQLRTDLPTFRTGDTLRVHVRIVEGSRERIQVFEGVVIKRRGGGISETFTVRKISSGVGVERTFPLHTPKIEKIELKRRGKVRRAKLYYLRSLRGKAARIQEIR.

It belongs to the bacterial ribosomal protein bL19 family.

This protein is located at the 30S-50S ribosomal subunit interface and may play a role in the structure and function of the aminoacyl-tRNA binding site. This is Large ribosomal subunit protein bL19 from Staphylococcus haemolyticus (strain JCSC1435).